A 29-amino-acid chain; its full sequence is MSGYGTSFALIVVLFILLIIVGTAFVGGY.

The chain crosses the membrane as a helical span at residues Phe8–Gly28.

It belongs to the SscA family.

Its subcellular location is the membrane. This is an uncharacterized protein from Bacillus subtilis (strain 168).